An 807-amino-acid chain; its full sequence is SWI/SNF complex subunit SWI3C (807 aa).

The tract at residues 1 to 74 (MPASEDRRGK…DPGLGIGEVV (74 aa)) is disordered. The span at 28 to 54 (EEEDMEEEDEENNNNNNEEMDDVENAD) shows a compositional bias: acidic residues. The SWIRM domain maps to 176–274 (HVLPMHSDWF…YCATAQSHPG (99 aa)). The segment at 340–394 (LCDSHCNHCSRPLPTVYFQSQKKGDILLCCDCFHHGRFVVGHSCLDFVRVDPMKF) adopts a ZZ-type; degenerate zinc-finger fold. Residues C345, C348, C368, and C371 each contribute to the Zn(2+) site. An SANT domain is found at 398–449 (QDGDNWTDQETLLLLEAVELYNENWVQIADHVGSKSKAQCILHFLRLPVEDG). Composition is skewed to polar residues over residues 458–467 (GVTNTENPTN) and 552–569 (ENQQ…NGAE). 2 disordered regions span residues 458–487 (GVTN…SEQG) and 549–571 (LDGE…AEAQ). Residues 598 to 656 (ADHEEREIQRLSANIVNHQLKRMELKLKQFAEIETLLMKECEQVEKTRQRFSAERARML) adopt a coiled-coil conformation. 2 stretches are compositionally biased toward low complexity: residues 692–703 (QHQQQQASATSQ) and 726–739 (QQQQ…QQQQ). Disordered stretches follow at residues 692-713 (QHQQ…FSNN), 721-740 (HFMA…QQQA), and 781-807 (SINQ…LGLN). Over residues 798–807 (SGSGSGLGLN) the composition is skewed to gly residues.

As to quaternary structure, heterodimer. Interacts with SWI3A, SWI3B and BRM, but not with BSH. Interacts with MORC6 and SUVH9. As to expression, expressed in roots, stems, leaves, flowers and siliques.

It is found in the nucleus. Functionally, component of a multiprotein complex equivalent of the SWI/SNF complex, an ATP-dependent chromatin-remodeling complex, which is required for the positive and negative regulation of gene expression of a large number of genes. It changes chromatin structure by altering DNA-histone contacts within a nucleosome, leading eventually to a change in nucleosome position, thus facilitating or repressing binding of gene-specific transcription factors. This chain is SWI/SNF complex subunit SWI3C (SWI3C), found in Arabidopsis thaliana (Mouse-ear cress).